The primary structure comprises 79 residues: MSDIEARVKKIIAEQLGVAEGEVTNEKAFVADLGADSLDTVELVMALEDEFSIEIPDEEAEKITTVQLAIDYAKSHAKA.

Positions 2 to 77 (SDIEARVKKI…LAIDYAKSHA (76 aa)) constitute a Carrier domain. Position 37 is an O-(pantetheine 4'-phosphoryl)serine (Ser-37).

Belongs to the acyl carrier protein (ACP) family. In terms of processing, 4'-phosphopantetheine is transferred from CoA to a specific serine of apo-ACP by AcpS. This modification is essential for activity because fatty acids are bound in thioester linkage to the sulfhydryl of the prosthetic group.

It is found in the cytoplasm. Its pathway is lipid metabolism; fatty acid biosynthesis. Functionally, carrier of the growing fatty acid chain in fatty acid biosynthesis. In Methylibium petroleiphilum (strain ATCC BAA-1232 / LMG 22953 / PM1), this protein is Acyl carrier protein.